A 210-amino-acid polypeptide reads, in one-letter code: TM2 domain-containing protein C02F5.13 (210 aa).

The first 18 residues, 1-18, serve as a signal peptide directing secretion; that stretch reads MRRLPWLIPFFLVNISNG. Over 19 to 138 the chain is Extracellular; it reads NNEFRIEFEY…PRTFTKSTPC (120 aa). Asparagine 91 carries N-linked (GlcNAc...) asparagine glycosylation. Residues 139 to 159 traverse the membrane as a helical segment; the sequence is IIYNGHYFLTTLLYSIFLGVV. Positions 143 to 191 constitute a TM2 domain; the sequence is GHYFLTTLLYSIFLGVVAVDRFCLGYSAMAVGKLMTLGGFGIWWIVDIF. The Cytoplasmic segment spans residues 160 to 178; sequence AVDRFCLGYSAMAVGKLMT. A helical membrane pass occupies residues 179–199; sequence LGGFGIWWIVDIFLLVLGVLG. The Extracellular portion of the chain corresponds to 200–210; that stretch reads PADDSSWEPYY.

Belongs to the TM2 family.

It localises to the membrane. The chain is TM2 domain-containing protein C02F5.13 from Caenorhabditis elegans.